The chain runs to 748 residues: MKIRLYGETMVVGNIIEGGKTVLNLTKEILEKEDENLKVSYPGTNYNLPIIYGLLGKKIETVKDLKELINSLEIKDEETLENALDAGVVTLICAEAIEALKYAKSEKPYKEPYVGFIPDEILRGLGVPLVEGKIPAILVVIGKVGDKEKLKKLIDDIKKRNILALLVGDIVKEMDEADIEYGLDKLLVPVGNEITSAIHAANLAIRAPLIFGGIEPGKTEEIIDYLKNRVPAVVVALGELDNITLAAGAGCIKAGVPVITNNEVPVIKGALESSDIDNIVENALKMKGVKVKVVEFDIPVSVGPMNEGERVRGPDMYVELAGPKSYGFELVKVVNKAEDKVEIIGKDIDEMEEGSRNPFAIIVEVSGSNLEEDLEGVLERRIHEFLNYIEGVMHLNQRDQVWIRINKNSFNKGLRLKHIGEVVKQLFKEHFPIVEKCNVIIITDPDKVKEELEKAKEIYKKRDEKTKSIREEDVDVFYGCVMCQSFAPTHVCIITPDRPSLCGSINYLDARAAAKIDPNGPIFEIPKGECLDEKLGIYTGVNEVVRERSQGSVEEMALHSALTNPCTSCGCFEAIVFYIPEVDGFGVAHRNFRGETPFGLPFSTLAGQCSGGKQVPGFVGISISYMKSPKFLQGDGGWERVVWLPKELKERVKDAIPEELYDKIATEEDVKTTDELIKFLKEKGHPIVKKTEEEVVEEVEEEKEEVKATEEEKEGIEVGELITKLAKEGGIQIIMKNVKIVINLNVKR.

4 residues coordinate [Ni-Fe-S] cluster: Cys480, Cys483, Cys569, and Cys571.

The protein belongs to the CdhC family. As to quaternary structure, monomer. The ACDS complex is made up of alpha, epsilon, beta, gamma and delta chains with a probable stoichiometry of (alpha(2)epsilon(2))(4)-beta(8)-(gamma(1)delta(1))(8) (Potential). [Ni-Fe-S] cluster serves as cofactor.

It carries out the reaction Co(I)-[corrinoid Fe-S protein] + acetyl-CoA + H(+) = methyl-Co(III)-[corrinoid Fe-S protein] + CO + CoA. Functionally, part of a complex that catalyzes the reversible cleavage of acetyl-CoA, allowing autotrophic growth from CO(2). The alpha-epsilon complex generates CO from CO(2), while the beta subunit (this protein) combines the CO with CoA and a methyl group to form acetyl-CoA. The methyl group, which is incorporated into acetyl-CoA, is transferred to the beta subunit by a corrinoid iron-sulfur protein (the gamma-delta complex). The protein is Acetyl-CoA decarbonylase/synthase complex subunit beta 1 (cdhC1) of Methanocaldococcus jannaschii (strain ATCC 43067 / DSM 2661 / JAL-1 / JCM 10045 / NBRC 100440) (Methanococcus jannaschii).